Reading from the N-terminus, the 157-residue chain is SsrA-binding protein (157 aa).

The interval 131 to 157 (KQLHDKRESVKQRDWQRDKARLMRDKG) is disordered. Residues 132–157 (QLHDKRESVKQRDWQRDKARLMRDKG) show a composition bias toward basic and acidic residues.

Belongs to the SmpB family.

It is found in the cytoplasm. Required for rescue of stalled ribosomes mediated by trans-translation. Binds to transfer-messenger RNA (tmRNA), required for stable association of tmRNA with ribosomes. tmRNA and SmpB together mimic tRNA shape, replacing the anticodon stem-loop with SmpB. tmRNA is encoded by the ssrA gene; the 2 termini fold to resemble tRNA(Ala) and it encodes a 'tag peptide', a short internal open reading frame. During trans-translation Ala-aminoacylated tmRNA acts like a tRNA, entering the A-site of stalled ribosomes, displacing the stalled mRNA. The ribosome then switches to translate the ORF on the tmRNA; the nascent peptide is terminated with the 'tag peptide' encoded by the tmRNA and targeted for degradation. The ribosome is freed to recommence translation, which seems to be the essential function of trans-translation. In Methylorubrum populi (strain ATCC BAA-705 / NCIMB 13946 / BJ001) (Methylobacterium populi), this protein is SsrA-binding protein.